We begin with the raw amino-acid sequence, 131 residues long: Glycine cleavage system H protein (131 aa).

In terms of domain architecture, Lipoyl-binding spans 24-106 (RVTVGISDHA…YGEGWIFVVE (83 aa)). Lys-65 carries the N6-lipoyllysine modification.

This sequence belongs to the GcvH family. As to quaternary structure, the glycine cleavage system is composed of four proteins: P, T, L and H. The cofactor is (R)-lipoate.

The glycine cleavage system catalyzes the degradation of glycine. The H protein shuttles the methylamine group of glycine from the P protein to the T protein. In Xanthomonas axonopodis pv. citri (strain 306), this protein is Glycine cleavage system H protein.